Reading from the N-terminus, the 436-residue chain is GTPase Der (436 aa).

2 consecutive EngA-type G domains span residues 4 to 167 and 176 to 351; these read PVVA…KNIP and VQFC…ENHS. GTP-binding positions include 10–17, 57–61, 119–122, 182–189, 229–233, and 294–297; these read GRPNVGKS, DTGGI, NKVD, DTAGM, and NKWD. Residues 352–436 form the KH-like domain; it reads MRVQTNILND…PIRIFARARK (85 aa).

This sequence belongs to the TRAFAC class TrmE-Era-EngA-EngB-Septin-like GTPase superfamily. EngA (Der) GTPase family. Associates with the 50S ribosomal subunit.

Functionally, GTPase that plays an essential role in the late steps of ribosome biogenesis. The polypeptide is GTPase Der (Bacillus licheniformis (strain ATCC 14580 / DSM 13 / JCM 2505 / CCUG 7422 / NBRC 12200 / NCIMB 9375 / NCTC 10341 / NRRL NRS-1264 / Gibson 46)).